The chain runs to 103 residues: GP16 protein (103 aa).

This Orgyia pseudotsugata multicapsid polyhedrosis virus (OpMNPV) protein is GP16 protein (GP16).